Reading from the N-terminus, the 282-residue chain is Shikimate dehydrogenase (NADP(+)) (282 aa).

Residues 15–17 and Thr62 contribute to the shikimate site; that span reads SKS. Lys66 serves as the catalytic Proton acceptor. The shikimate site is built by Asn87 and Asp103. NADP(+)-binding positions include 128–132, 152–157, and Met216; these read GAGGA and NRTPAK. Tyr218 provides a ligand contact to shikimate. Residue Gly240 coordinates NADP(+).

This sequence belongs to the shikimate dehydrogenase family. In terms of assembly, homodimer.

The enzyme catalyses shikimate + NADP(+) = 3-dehydroshikimate + NADPH + H(+). It participates in metabolic intermediate biosynthesis; chorismate biosynthesis; chorismate from D-erythrose 4-phosphate and phosphoenolpyruvate: step 4/7. Functionally, involved in the biosynthesis of the chorismate, which leads to the biosynthesis of aromatic amino acids. Catalyzes the reversible NADPH linked reduction of 3-dehydroshikimate (DHSA) to yield shikimate (SA). This is Shikimate dehydrogenase (NADP(+)) from Nitrosococcus oceani (strain ATCC 19707 / BCRC 17464 / JCM 30415 / NCIMB 11848 / C-107).